We begin with the raw amino-acid sequence, 130 residues long: MAQVQYSGTGRRKNAVARVRLVPGTGKITVNKKDVEEYIPHADLREVINQPFGVTETKGAYDVIVNVNGGGYAGQSGAIRHGIARALLQVDPDFRSALKRAGLLTRDARMVERKKPGLKKARKASQFSKR.

This sequence belongs to the universal ribosomal protein uS9 family.

The sequence is that of Small ribosomal subunit protein uS9 from Enterococcus faecalis (strain ATCC 700802 / V583).